A 221-amino-acid chain; its full sequence is Ribonuclease T (221 aa).

In terms of domain architecture, Exonuclease spans 20 to 196; it reads VVVDLETGGF…YDTERTAELF (177 aa). Mg(2+) contacts are provided by Asp23, Glu25, His183, and Asp188. The active-site Proton donor/acceptor is His183.

Belongs to the RNase T family. Homodimer. It depends on Mg(2+) as a cofactor.

Its function is as follows. Trims short 3' overhangs of a variety of RNA species, leaving a one or two nucleotide 3' overhang. Responsible for the end-turnover of tRNA: specifically removes the terminal AMP residue from uncharged tRNA (tRNA-C-C-A). Also appears to be involved in tRNA biosynthesis. In Chromohalobacter salexigens (strain ATCC BAA-138 / DSM 3043 / CIP 106854 / NCIMB 13768 / 1H11), this protein is Ribonuclease T.